Consider the following 142-residue polypeptide: Autophagy-related protein 31 (142 aa).

Its subcellular location is the cytoplasm. It localises to the cytoskeleton. The protein resides in the preautophagosomal structure. Its function is as follows. Plays a role in starvation-induced autophagy. Involved in mitophagy. Functions with ATG17 and ATG29 at the preautophagosomal structure (PAS) in order to form normal autophagosomes under starvation conditions. May be involved in microtubule function, such as chromosome segregation and karyogamy. The sequence is that of Autophagy-related protein 31 (CIS1) from Eremothecium gossypii (strain ATCC 10895 / CBS 109.51 / FGSC 9923 / NRRL Y-1056) (Yeast).